The following is a 208-amino-acid chain: Cytochrome c biogenesis ATP-binding export protein CcmA (208 aa).

In terms of domain architecture, ABC transporter spans 3-206 (LSGKDLAAHR…LEKFVPSQER (204 aa)). 35 to 42 (GPNGIGKS) serves as a coordination point for ATP.

It belongs to the ABC transporter superfamily. CcmA exporter (TC 3.A.1.107) family. As to quaternary structure, the complex is composed of two ATP-binding proteins (CcmA) and two transmembrane proteins (CcmB).

Its subcellular location is the cell inner membrane. The enzyme catalyses heme b(in) + ATP + H2O = heme b(out) + ADP + phosphate + H(+). Its function is as follows. Part of the ABC transporter complex CcmAB involved in the biogenesis of c-type cytochromes; once thought to export heme, this seems not to be the case, but its exact role is uncertain. Responsible for energy coupling to the transport system. The sequence is that of Cytochrome c biogenesis ATP-binding export protein CcmA from Bartonella quintana (strain Toulouse) (Rochalimaea quintana).